The following is a 960-amino-acid chain: Putative helicase L207/L206 (960 aa).

Residues 1 to 32 (MTSKTENKKSVSSKTGRTTNNSTNKKTTEKSV) are disordered. Positions 12 to 25 (SSKTGRTTNNSTNK) are enriched in low complexity. One can recognise an SF3 helicase domain in the interval 646-807 (SMREYILTLL…FIKHSEATKK (162 aa)).

The polypeptide is Putative helicase L207/L206 (Acanthamoeba polyphaga mimivirus (APMV)).